An 866-amino-acid chain; its full sequence is Rifampicin phosphotransferase (866 aa).

Residues 1–313 are ATP-binding; it reads MSSLVLGLHE…FYIVQSRPIT (313 aa). Residues Lys-22, Arg-116, Gly-131, Thr-135, Gln-182, Glu-296, Gln-308, and Arg-310 each coordinate ATP. The rifampicin-binding stretch occupies residues 326–754; the sequence is NHVYISVGHQ…TSDGEIVTGE (429 aa). Positions 410–429 are disordered; that stretch reads IPNDKTAPNPSRGNADMPAQ. Positions 767–865 are swivel phosphohistidine; the sequence is GLPVSSGVIE…VHGTEGYIEI (99 aa). His-825 (tele-phosphohistidine intermediate) is an active-site residue.

It belongs to the rifampicin phosphotransferase family.

It catalyses the reaction rifampicin + ATP + H2O = 21-phosphorifampicin + AMP + phosphate + 2 H(+). In terms of biological role, catalyzes the phosphorylation of rifampicin, also known as rifampin (RIF), leading to its inactivation. The sequence is that of Rifampicin phosphotransferase from Bacillus subtilis (strain 168).